The following is a 425-amino-acid chain: Type I restriction enzyme MjaVII specificity subunit (425 aa).

The target recognition domain 1 stretch occupies residues 9 to 168 (KKTEIGEIPE…KSFKIPLPPL (160 aa)). Residues 169–208 (EEQKQIAKILTKIDEGIEIIEKSINKLERIKKGLMHKLLT) form a central conserved region (CCR) region. Positions 169-208 (EEQKQIAKILTKIDEGIEIIEKSINKLERIKKGLMHKLLT) form a coiled coil. Positions 209 to 368 (KGIGHSRFKK…TFKELSKSML (160 aa)) are target recognition domain 2. Positions 369–418 (ENFKIPLPPLEEQKQIAKILSSVDKSIELKKQKKEKLQRMKKKIMELLLT) form a coiled coil. A distal conserved region (DCR) region spans residues 369-418 (ENFKIPLPPLEEQKQIAKILSSVDKSIELKKQKKEKLQRMKKKIMELLLT).

It belongs to the type-I restriction system S methylase family. The type I restriction/modification system is composed of three polypeptides R, M and S.

Functionally, the specificity (S) subunit of a type I restriction enzyme; this subunit dictates DNA sequence specificity. The M and S subunits together form a methyltransferase (MTase) that methylates A-3 on the top and bottom strands of the sequence 5'-CAAN(7)TGG-3'. In the presence of the R subunit the complex can also act as an endonuclease, binding to the same target sequence but cutting the DNA some distance from this site. Whether the DNA is cut or modified depends on the methylation state of the target sequence. When the target site is unmodified, the DNA is cut. When the target site is hemimethylated, the complex acts as a maintenance MTase modifying the DNA so that both strands become methylated. After locating a non-methylated recognition site, the enzyme complex serves as a molecular motor that translocates DNA in an ATP-dependent manner until a collision occurs that triggers cleavage. The chain is Type I restriction enzyme MjaVII specificity subunit from Methanocaldococcus jannaschii (strain ATCC 43067 / DSM 2661 / JAL-1 / JCM 10045 / NBRC 100440) (Methanococcus jannaschii).